The primary structure comprises 172 residues: 3-phenylpropionate/cinnamic acid dioxygenase subunit beta (172 aa).

The protein belongs to the bacterial ring-hydroxylating dioxygenase beta subunit family. In terms of assembly, this dioxygenase system consists of four proteins: the two subunits of the hydroxylase component (HcaE and HcaF), a ferredoxin (HcaC) and a ferredoxin reductase (HcaD).

It catalyses the reaction 3-phenylpropanoate + NADH + O2 + H(+) = 3-(cis-5,6-dihydroxycyclohexa-1,3-dien-1-yl)propanoate + NAD(+). The enzyme catalyses (E)-cinnamate + NADH + O2 + H(+) = (2E)-3-(cis-5,6-dihydroxycyclohexa-1,3-dien-1-yl)prop-2-enoate + NAD(+). It participates in aromatic compound metabolism; 3-phenylpropanoate degradation. Functionally, part of the multicomponent 3-phenylpropionate dioxygenase. Converts 3-phenylpropionic acid (PP) and cinnamic acid (CI) into 3-phenylpropionate-dihydrodiol (PP-dihydrodiol) and cinnamic acid-dihydrodiol (CI-dihydrodiol), respectively. The polypeptide is 3-phenylpropionate/cinnamic acid dioxygenase subunit beta (Escherichia coli O7:K1 (strain IAI39 / ExPEC)).